We begin with the raw amino-acid sequence, 801 residues long: Na(+)/H(+) antiporter subunit A1 (801 aa).

19 helical membrane passes run 1–21, 28–48, 79–99, 117–137, 166–186, 206–226, 265–285, 300–320, 337–357, 373–393, 427–447, 472–492, 522–542, 591–611, 623–643, 646–666, 671–691, 707–727, and 764–784; these read MSLL…IPIL, IHLG…MLTL, LGLL…LYSI, LFMG…LYLF, LIIT…LAIP, PFFI…SAQF, IFAA…ITLF, ILAF…GIGA, FTAA…LFMI, LGGL…TALS, LGYL…VYSI, ILML…GLFP, GLTP…LLIV, LVII…SVPF, IFEV…LFAK, LFSI…FIFF, LALT…LCFY, LTNA…GLIA, and MDTL…YTMI.

It belongs to the CPA3 antiporters (TC 2.A.63) subunit A family. As to quaternary structure, may form a heterooligomeric complex that consists of seven subunits: mnhA1, mnhB1, mnhC1, mnhD1, mnhE1, mnhF1 and mnhG1.

The protein localises to the cell membrane. Functionally, mnh complex is a Na(+)/H(+) antiporter involved in Na(+) excretion. This chain is Na(+)/H(+) antiporter subunit A1 (mnhA1), found in Staphylococcus aureus (strain Mu3 / ATCC 700698).